The primary structure comprises 429 residues: Glutamate-1-semialdehyde 2,1-aminomutase (429 aa).

N6-(pyridoxal phosphate)lysine is present on K265.

It belongs to the class-III pyridoxal-phosphate-dependent aminotransferase family. HemL subfamily. In terms of assembly, homodimer. It depends on pyridoxal 5'-phosphate as a cofactor.

Its subcellular location is the cytoplasm. The enzyme catalyses (S)-4-amino-5-oxopentanoate = 5-aminolevulinate. It functions in the pathway porphyrin-containing compound metabolism; protoporphyrin-IX biosynthesis; 5-aminolevulinate from L-glutamyl-tRNA(Glu): step 2/2. The sequence is that of Glutamate-1-semialdehyde 2,1-aminomutase from Shewanella halifaxensis (strain HAW-EB4).